We begin with the raw amino-acid sequence, 243 residues long: UDP-2,3-diacylglucosamine hydrolase (243 aa).

Residues Asp-9, His-11, Asp-42, Asn-79, and His-114 each coordinate Mn(2+). Asn-79–Arg-80 serves as a coordination point for substrate. 4 residues coordinate substrate: Asp-122, Ser-160, Asn-164, and His-195. The Mn(2+) site is built by His-195 and His-197.

It belongs to the LpxH family. Requires Mn(2+) as cofactor.

The protein localises to the cell inner membrane. It catalyses the reaction UDP-2-N,3-O-bis[(3R)-3-hydroxytetradecanoyl]-alpha-D-glucosamine + H2O = 2-N,3-O-bis[(3R)-3-hydroxytetradecanoyl]-alpha-D-glucosaminyl 1-phosphate + UMP + 2 H(+). Its pathway is glycolipid biosynthesis; lipid IV(A) biosynthesis; lipid IV(A) from (3R)-3-hydroxytetradecanoyl-[acyl-carrier-protein] and UDP-N-acetyl-alpha-D-glucosamine: step 4/6. Hydrolyzes the pyrophosphate bond of UDP-2,3-diacylglucosamine to yield 2,3-diacylglucosamine 1-phosphate (lipid X) and UMP by catalyzing the attack of water at the alpha-P atom. Involved in the biosynthesis of lipid A, a phosphorylated glycolipid that anchors the lipopolysaccharide to the outer membrane of the cell. This is UDP-2,3-diacylglucosamine hydrolase from Coxiella burnetii (strain Dugway 5J108-111).